The chain runs to 193 residues: dCTP deaminase (193 aa).

DCTP is bound by residues 110–115, aspartate 128, 136–138, tyrosine 171, lysine 178, and glutamine 182; these read RSSLAR and VLE. Glutamate 138 (proton donor/acceptor) is an active-site residue. Positions 173-193 are disordered; it reads KRKNAKYKDQQDAVASRISQD.

The protein belongs to the dCTP deaminase family. As to quaternary structure, homotrimer.

It carries out the reaction dCTP + H2O + H(+) = dUTP + NH4(+). The protein operates within pyrimidine metabolism; dUMP biosynthesis; dUMP from dCTP (dUTP route): step 1/2. Catalyzes the deamination of dCTP to dUTP. The polypeptide is dCTP deaminase (Shewanella sp. (strain ANA-3)).